The chain runs to 433 residues: Monodehydroascorbate reductase (433 aa).

FAD-binding positions include 13 to 16 (GGVS), Glu-40, Arg-47, Lys-52, Ile-95, and 146 to 147 (RE). NAD(+)-binding positions include 171-177 (GGYIGLE), Glu-195, Arg-201, and Gly-260. Position 173–177 (173–177 (YIGLE)) interacts with NADP(+). NADP(+)-binding residues include Arg-201 and Gly-260. Residue Asp-297 participates in FAD binding. Residue 313–314 (EH) participates in NAD(+) binding. An NADP(+)-binding site is contributed by 313–314 (EH). Position 315 (Val-315) interacts with FAD. Arg-319 is an L-ascorbate binding site. Tyr-348 provides a ligand contact to FAD. Residue Tyr-348 participates in NAD(+) binding. NADP(+) is bound at residue Tyr-348. Arg-350 lines the L-ascorbate pocket.

The protein belongs to the FAD-dependent oxidoreductase family. FAD is required as a cofactor. As to expression, expressed in leaves, and to a lesser degree in stems, roots and all stages of fruit.

It is found in the cytoplasm. It catalyses the reaction 2 monodehydro-L-ascorbate radical + NADH + H(+) = 2 L-ascorbate + NAD(+). Its function is as follows. Catalyzes the conversion of monodehydroascorbate to ascorbate, oxidizing NADH in the process. This Solanum lycopersicum (Tomato) protein is Monodehydroascorbate reductase.